The chain runs to 420 residues: 2',3'-cyclic-nucleotide 3'-phosphodiesterase (420 aa).

Ser9 is modified (phosphoserine). Tyr110 carries the post-translational modification Phosphotyrosine. Residues Ser169, Ser227, and Ser239 each carry the phosphoserine modification. The active-site Proton acceptor is His250. Position 252 (Thr252) interacts with substrate. Residue Thr262 is modified to Phosphothreonine. His329 functions as the Proton donor in the catalytic mechanism. Thr331 lines the substrate pocket. Ser358 is modified (phosphoserine). Residue Cys417 is modified to Cysteine methyl ester. Cys417 carries S-farnesyl cysteine lipidation. The propeptide at Thr418–Ile420 is removed in mature form.

This sequence belongs to the 2H phosphoesterase superfamily. CNPase family. As to quaternary structure, exists as monomers and homodimers.

Its subcellular location is the membrane. It is found in the melanosome. The enzyme catalyses a nucleoside 2',3'-cyclic phosphate + H2O = a nucleoside 2'-phosphate + H(+). Functionally, catalyzes the formation of 2'-nucleotide products from 2',3'-cyclic substrates. May participate in RNA metabolism in the myelinating cell, CNP is the third most abundant protein in central nervous system myelin. This is 2',3'-cyclic-nucleotide 3'-phosphodiesterase from Rattus norvegicus (Rat).